Reading from the N-terminus, the 142-residue chain is Large ribosomal subunit protein uL11 (142 aa).

A N,N,N-trimethylalanine modification is found at Ala-2. N6,N6,N6-trimethyllysine occurs at positions 4 and 40.

Belongs to the universal ribosomal protein uL11 family. In terms of assembly, part of the ribosomal stalk of the 50S ribosomal subunit. Interacts with L10 and the large rRNA to form the base of the stalk. L10 forms an elongated spine to which L12 dimers bind in a sequential fashion forming a multimeric L10(L12)X complex. Post-translationally, one or more lysine residues are methylated.

Functionally, forms part of the ribosomal stalk which helps the ribosome interact with GTP-bound translation factors. The protein is Large ribosomal subunit protein uL11 of Shigella flexneri.